A 252-amino-acid chain; its full sequence is 5'-nucleotidase SurE (252 aa).

Asp8, Asp9, Ser40, and Asn92 together coordinate a divalent metal cation.

Belongs to the SurE nucleotidase family. A divalent metal cation is required as a cofactor.

The protein localises to the cytoplasm. The enzyme catalyses a ribonucleoside 5'-phosphate + H2O = a ribonucleoside + phosphate. Its function is as follows. Nucleotidase that shows phosphatase activity on nucleoside 5'-monophosphates. This Chelativorans sp. (strain BNC1) protein is 5'-nucleotidase SurE.